We begin with the raw amino-acid sequence, 481 residues long: Glutamate mutase epsilon subunit (481 aa).

Arginine 67 is a binding site for L-glutamate. Glycine 69 lines the adenosylcob(III)alamin pocket. Arginine 99 contacts L-glutamate. Asparagine 122 lines the adenosylcob(III)alamin pocket. Residues arginine 148 to histidine 149, glutamate 170, and tyrosine 176 each bind L-glutamate. Position 179 (proline 179) interacts with adenosylcob(III)alamin. Tyrosine 180 is a binding site for L-glutamate. Residues phenylalanine 296, lysine 325, glutamate 329, and isoleucine 333 each contribute to the adenosylcob(III)alamin site.

Belongs to the methylaspartate mutase GlmE subunit family. In terms of assembly, heterotetramer composed of 2 epsilon subunits (GlmE) and 2 sigma subunits (GlmS). GlmE exists as a homodimer and GlmS as a monomer. The cofactor is adenosylcob(III)alamin.

It catalyses the reaction (2S,3S)-3-methyl-L-aspartate = L-glutamate. It participates in amino-acid degradation; L-glutamate degradation via mesaconate pathway; acetate and pyruvate from L-glutamate: step 1/4. Its function is as follows. Catalyzes the carbon skeleton rearrangement of L-glutamate to L-threo-3-methylaspartate ((2S,3S)-3-methylaspartate). The sequence is that of Glutamate mutase epsilon subunit from Yersinia enterocolitica serotype O:8 / biotype 1B (strain NCTC 13174 / 8081).